We begin with the raw amino-acid sequence, 488 residues long: Envelope glycoprotein gp62 (488 aa).

The signal sequence occupies residues 1–20 (MGKFLATLILFFQFCPLILS). Residues 21–442 (DYSPSCCTLT…LGLSQWAREA (422 aa)) are Extracellular-facing. 2 N-linked (GlcNAc...) asparagine; by host glycosylation sites follow: Asn140 and Asn222. Residues 225–228 (CIVC) carry the CXXC motif. 3 cysteine pairs are disulfide-bonded: Cys225–Cys228, Cys225–Cys401, and Cys393–Cys400. N-linked (GlcNAc...) asparagine; by host glycans are attached at residues Asn244 and Asn272. The segment at 313–333 (AVPVAVWLVSALAMGAGMAGG) is fusion peptide. Coiled coils occupy residues 341–387 (ASGR…LLFW) and 397–429 (QEQCCFLNITNSHVSILQERPPLENRVLTGWGL). The immunosuppression stretch occupies residues 376 to 392 (AQNRRGLDLLFWEQGGL). The short motif at 393–401 (CKALQEQCC) is the CX6CC element. An N-linked (GlcNAc...) asparagine; by host glycan is attached at Asn404. A helical transmembrane segment spans residues 443-463 (LQTGITLVALLLLVILAGPCI). Cys462 is lipidated: S-palmitoyl cysteine; by host. Residues 464–488 (LRQLRHLPSRVRYPHYSLINPESSL) are Cytoplasmic-facing.

In terms of assembly, the mature envelope protein (Env) consists of a trimer of SU-TM heterodimers attached by a labile interchain disulfide bond. In terms of processing, specific enzymatic cleavages in vivo yield mature proteins. Envelope glycoproteins are synthesized as an inactive precursor that is N-glycosylated and processed likely by host cell furin or by a furin-like protease in the Golgi to yield the mature SU and TM proteins. The cleavage site between SU and TM requires the minimal sequence [KR]-X-[KR]-R. Post-translationally, the CXXC motif is highly conserved across a broad range of retroviral envelope proteins. It is thought to participate in the formation of a labile disulfide bond possibly with the CX6CC motif present in the transmembrane protein. Isomerization of the intersubunit disulfide bond to an SU intrachain disulfide bond is thought to occur upon receptor recognition in order to allow membrane fusion. The transmembrane protein is palmitoylated.

It is found in the virion membrane. Its subcellular location is the host cell membrane. Functionally, the surface protein (SU) attaches the virus to the host cell by binding to its receptor. This interaction triggers the refolding of the transmembrane protein (TM) and is thought to activate its fusogenic potential by unmasking its fusion peptide. Fusion occurs at the host cell plasma membrane. In terms of biological role, the transmembrane protein (TM) acts as a class I viral fusion protein. Under the current model, the protein has at least 3 conformational states: pre-fusion native state, pre-hairpin intermediate state, and post-fusion hairpin state. During viral and target cell membrane fusion, the coiled coil regions (heptad repeats) assume a trimer-of-hairpins structure, positioning the fusion peptide in close proximity to the C-terminal region of the ectodomain. The formation of this structure appears to drive apposition and subsequent fusion of viral and target cell membranes. Membranes fusion leads to delivery of the nucleocapsid into the cytoplasm. The sequence is that of Envelope glycoprotein gp62 (env) from Human T-cell leukemia virus 1 (isolate Zaire EL subtype B) (HTLV-1).